The sequence spans 220 residues: MPGPADEHLQRMRVEYGSVEKDGSPDLDVDWLDDGWVALLRKWIDDAERAGVAEPNAMVLATVTPDGRPASRTVLCKSLDETGITFFTNYDSAKADDLAATPYAAVTFPWYQLGRQVHLRGPVSKVTAQVTEDYWSKRPRGSQLGAWASQQSRPIASRAALLEQLAQVTARFADHERVPVPPGWGGYLIAADVVEFWQGRENRLHNRIRVTGDRVERLQP.

Residues 13–16 (RVEY) and lysine 77 contribute to the substrate site. Residues 72 to 77 (RTVLCK), 87 to 88 (FT), lysine 94, and glutamine 116 contribute to the FMN site. Substrate is bound by residues tyrosine 134, arginine 138, and serine 142. Residues 151 to 152 (QS) and tryptophan 197 each bind FMN. Residue 203 to 205 (RLH) participates in substrate binding. Arginine 207 provides a ligand contact to FMN.

It belongs to the pyridoxamine 5'-phosphate oxidase family. In terms of assembly, homodimer. FMN serves as cofactor.

It catalyses the reaction pyridoxamine 5'-phosphate + O2 + H2O = pyridoxal 5'-phosphate + H2O2 + NH4(+). The enzyme catalyses pyridoxine 5'-phosphate + O2 = pyridoxal 5'-phosphate + H2O2. It functions in the pathway cofactor metabolism; pyridoxal 5'-phosphate salvage; pyridoxal 5'-phosphate from pyridoxamine 5'-phosphate: step 1/1. Its pathway is cofactor metabolism; pyridoxal 5'-phosphate salvage; pyridoxal 5'-phosphate from pyridoxine 5'-phosphate: step 1/1. Its function is as follows. Catalyzes the oxidation of either pyridoxine 5'-phosphate (PNP) or pyridoxamine 5'-phosphate (PMP) into pyridoxal 5'-phosphate (PLP). The sequence is that of Pyridoxine/pyridoxamine 5'-phosphate oxidase from Mycolicibacterium paratuberculosis (strain ATCC BAA-968 / K-10) (Mycobacterium paratuberculosis).